Consider the following 302-residue polypeptide: 3-methyl-2-oxobutanoate hydroxymethyltransferase 1 (302 aa).

2 residues coordinate Mg(2+): aspartate 75 and aspartate 118. Residues 75-76 (DS), aspartate 118, and lysine 147 contribute to the 3-methyl-2-oxobutanoate site. Position 149 (glutamate 149) interacts with Mg(2+). The Proton acceptor role is filled by glutamate 217.

This sequence belongs to the PanB family. As to quaternary structure, homodecamer; pentamer of dimers. Requires Mg(2+) as cofactor.

It is found in the cytoplasm. The enzyme catalyses 3-methyl-2-oxobutanoate + (6R)-5,10-methylene-5,6,7,8-tetrahydrofolate + H2O = 2-dehydropantoate + (6S)-5,6,7,8-tetrahydrofolate. Its pathway is cofactor biosynthesis; (R)-pantothenate biosynthesis; (R)-pantoate from 3-methyl-2-oxobutanoate: step 1/2. Catalyzes the reversible reaction in which hydroxymethyl group from 5,10-methylenetetrahydrofolate is transferred onto alpha-ketoisovalerate to form ketopantoate. The chain is 3-methyl-2-oxobutanoate hydroxymethyltransferase 1 from Zymomonas mobilis subsp. mobilis (strain ATCC 31821 / ZM4 / CP4).